The primary structure comprises 588 residues: Aspartate--tRNA ligase (588 aa).

An L-aspartate-binding site is contributed by E177. Positions 201–204 (QIFK) are aspartate. An L-aspartate-binding site is contributed by R223. ATP is bound by residues 223-225 (RDE) and Q232. An L-aspartate-binding site is contributed by H451. E485 contributes to the ATP binding site. R492 is an L-aspartate binding site. Position 537–540 (537–540 (GLDR)) interacts with ATP.

This sequence belongs to the class-II aminoacyl-tRNA synthetase family. Type 1 subfamily. In terms of assembly, homodimer.

The protein resides in the cytoplasm. The enzyme catalyses tRNA(Asp) + L-aspartate + ATP = L-aspartyl-tRNA(Asp) + AMP + diphosphate. In terms of biological role, catalyzes the attachment of L-aspartate to tRNA(Asp) in a two-step reaction: L-aspartate is first activated by ATP to form Asp-AMP and then transferred to the acceptor end of tRNA(Asp). The polypeptide is Aspartate--tRNA ligase (Staphylococcus saprophyticus subsp. saprophyticus (strain ATCC 15305 / DSM 20229 / NCIMB 8711 / NCTC 7292 / S-41)).